The following is a 161-amino-acid chain: Nucleotide-binding protein Dtpsy_2240 (161 aa).

The protein belongs to the YajQ family.

Functionally, nucleotide-binding protein. This is Nucleotide-binding protein Dtpsy_2240 from Acidovorax ebreus (strain TPSY) (Diaphorobacter sp. (strain TPSY)).